The sequence spans 365 residues: Chorismate synthase (365 aa).

2 residues coordinate NADP(+): R48 and R54. FMN-binding positions include R131–S133, N243–A244, G288, K303–S307, and R329.

This sequence belongs to the chorismate synthase family. As to quaternary structure, homotetramer. FMNH2 is required as a cofactor.

The catalysed reaction is 5-O-(1-carboxyvinyl)-3-phosphoshikimate = chorismate + phosphate. It functions in the pathway metabolic intermediate biosynthesis; chorismate biosynthesis; chorismate from D-erythrose 4-phosphate and phosphoenolpyruvate: step 7/7. Catalyzes the anti-1,4-elimination of the C-3 phosphate and the C-6 proR hydrogen from 5-enolpyruvylshikimate-3-phosphate (EPSP) to yield chorismate, which is the branch point compound that serves as the starting substrate for the three terminal pathways of aromatic amino acid biosynthesis. This reaction introduces a second double bond into the aromatic ring system. The polypeptide is Chorismate synthase (Rhizobium leguminosarum bv. trifolii (strain WSM2304)).